The chain runs to 142 residues: Large ribosomal subunit protein uL13c (142 aa).

Belongs to the universal ribosomal protein uL13 family. As to quaternary structure, part of the 50S ribosomal subunit.

Its subcellular location is the plastid. The protein resides in the chloroplast. This Pyropia yezoensis (Susabi-nori) protein is Large ribosomal subunit protein uL13c.